A 1151-amino-acid polypeptide reads, in one-letter code: ATP-dependent helicase/deoxyribonuclease subunit B (1151 aa).

In terms of domain architecture, UvrD-like helicase ATP-binding spans Met-1–Glu-273. Gly-8 to Thr-15 is an ATP binding site. The UvrD-like helicase C-terminal domain occupies Pro-282 to Asp-578. 4 residues coordinate [4Fe-4S] cluster: Cys-788, Cys-1107, Cys-1110, and Cys-1116.

Belongs to the helicase family. AddB/RexB type 1 subfamily. In terms of assembly, heterodimer of AddA and AddB. Requires Mg(2+) as cofactor. [4Fe-4S] cluster serves as cofactor.

Functionally, the heterodimer acts as both an ATP-dependent DNA helicase and an ATP-dependent, dual-direction single-stranded exonuclease. Recognizes the chi site generating a DNA molecule suitable for the initiation of homologous recombination. The AddB subunit has 5' -&gt; 3' nuclease activity but not helicase activity. In Moorella thermoacetica (strain ATCC 39073 / JCM 9320), this protein is ATP-dependent helicase/deoxyribonuclease subunit B.